Consider the following 409-residue polypeptide: Phosphopentomutase (409 aa).

Asp-10, Asp-308, His-313, Asp-349, His-350, and His-361 together coordinate Mn(2+).

Belongs to the phosphopentomutase family. Mn(2+) is required as a cofactor.

The protein localises to the cytoplasm. It catalyses the reaction 2-deoxy-alpha-D-ribose 1-phosphate = 2-deoxy-D-ribose 5-phosphate. It carries out the reaction alpha-D-ribose 1-phosphate = D-ribose 5-phosphate. It functions in the pathway carbohydrate degradation; 2-deoxy-D-ribose 1-phosphate degradation; D-glyceraldehyde 3-phosphate and acetaldehyde from 2-deoxy-alpha-D-ribose 1-phosphate: step 1/2. In terms of biological role, isomerase that catalyzes the conversion of deoxy-ribose 1-phosphate (dRib-1-P) and ribose 1-phosphate (Rib-1-P) to deoxy-ribose 5-phosphate (dRib-5-P) and ribose 5-phosphate (Rib-5-P), respectively. This Buchnera aphidicola subsp. Schizaphis graminum (strain Sg) protein is Phosphopentomutase.